The sequence spans 287 residues: 1-acyl-sn-glycerol-3-phosphate acyltransferase alpha (287 aa).

An N-terminal signal peptide occupies residues 1 to 26; it reads MELWPGAGTLLLLLFLLLLLLLPTLW. Residues 27-37 lie on the Lumenal side of the membrane; that stretch reads FCSPSAKYFFK. Residues 38-58 form a helical membrane-spanning segment; sequence MAFYNGWILFLAVLAIPVCAV. Topologically, residues 59–127 are cytoplasmic; the sequence is RGRNVENMKI…PGRCVPIAKR (69 aa). The HXXXXD motif signature appears at 104–109; sequence HQSSLD. The helical transmembrane segment at 128-148 threads the bilayer; sequence ELLWAGSAGLACWLAGVIFID. The Lumenal segment spans residues 149 to 287; the sequence is RKRTGDAISV…KPGGVGEAGL (139 aa). An EGTR motif motif is present at residues 178 to 181; that stretch reads EGTR.

This sequence belongs to the 1-acyl-sn-glycerol-3-phosphate acyltransferase family.

It localises to the endoplasmic reticulum membrane. It carries out the reaction a 1-acyl-sn-glycero-3-phosphate + an acyl-CoA = a 1,2-diacyl-sn-glycero-3-phosphate + CoA. It catalyses the reaction 1-(9Z-octadecenoyl)-sn-glycero-3-phosphate + (9Z)-octadecenoyl-CoA = 1,2-di-(9Z-octadecenoyl)-sn-glycero-3-phosphate + CoA. The catalysed reaction is 1-(9Z-octadecenoyl)-sn-glycero-3-phosphate + hexadecanoyl-CoA = 1-(9Z)-octadecenoyl-2-hexadecanoyl-sn-glycero-3-phosphate + CoA. The enzyme catalyses heptadecanoyl-CoA + 1-(9Z-octadecenoyl)-sn-glycero-3-phosphate = 1-(9Z)-octadecenoyl-2-heptadecanoyl-sn-glycero-3-phosphate + CoA. It carries out the reaction 1-(9Z-octadecenoyl)-sn-glycero-3-phosphate + octadecanoyl-CoA = 1-(9Z-octadecenoyl)-2-octadecanoyl-sn-glycero-3-phosphate + CoA. It catalyses the reaction 1-(9Z-octadecenoyl)-sn-glycero-3-phosphate + (9Z,12Z)-octadecadienoyl-CoA = 1-(9Z)-octadecenoyl-2-(9Z,12Z)-octadecadienoyl-sn-glycero-3-phosphate + CoA. The catalysed reaction is 1-(9Z-octadecenoyl)-sn-glycero-3-phosphate + tetradecanoyl-CoA = 1-(9Z)-octadecenoyl-2-tetradecanoyl-sn-glycero-3-phosphate + CoA. The enzyme catalyses pentadecanoyl-CoA + 1-(9Z-octadecenoyl)-sn-glycero-3-phosphate = 1-(9Z)-octadecenoyl-2-pentadecanoyl-sn-glycero-3-phosphate + CoA. It carries out the reaction 1-hexadecanoyl-sn-glycero-3-phosphate + (9Z)-octadecenoyl-CoA = 1-hexadecanoyl-2-(9Z-octadecenoyl)-sn-glycero-3-phosphate + CoA. It catalyses the reaction 1-(9Z,12Z,15Z)-octadecatrienoyl-sn-glycero-3-phosphate + (9Z)-octadecenoyl-CoA = 1-(9Z,12Z,15Z)-octadecatrienoyl-2-(9Z)-octadecenoyl-sn-glycero-3-phosphate + CoA. The catalysed reaction is 1-(6Z,9Z,12Z-octadecatrienoyl)-sn-glycero-3-phosphate + (9Z)-octadecenoyl-CoA = (6Z,9Z,12Z)-octadecatrienoyl-2-(9Z)-octadecenoyl-sn-glycero-3-phosphate + CoA. The enzyme catalyses 1-eicosanoyl-sn-glycero-3-phosphate + (9Z)-octadecenoyl-CoA = 1-eicosanoyl-2-(9Z)-octadecenoyl-sn-glycero-3-phosphate + CoA. It carries out the reaction 1-tetradecanoyl-sn-glycerol 3-phosphate + (9Z)-octadecenoyl-CoA = 1-tetradecanoyl-2-(9Z)-octadecenoyl-sn-glycero-3-phosphate + CoA. It catalyses the reaction 1-(9Z-octadecenoyl)-sn-glycero-3-phosphate + (5Z,8Z,11Z,14Z)-eicosatetraenoyl-CoA = 1-(9Z)-octadecenoyl-2-(5Z,8Z,11Z,14Z)-eicosatetraenoyl-sn-glycero-3-phosphate + CoA. The catalysed reaction is 1-(9Z-octadecenoyl)-sn-glycero-3-phosphate + dodecanoyl-CoA = 1-(9Z)-octadecenoyl-2-dodecanoyl-sn-glycero-3-phosphate + CoA. The enzyme catalyses (6Z)-octadecenoyl-CoA + 1-(9Z-octadecenoyl)-sn-glycero-3-phosphate = 1-(9Z)-octadecenoyl-2-(6Z)-octadecenoyl-sn-glycero-3-phosphate + CoA. It carries out the reaction (11Z)-octadecenoyl-CoA + 1-(9Z-octadecenoyl)-sn-glycero-3-phosphate = 1-(9Z)-octadecenoyl-2-(11Z)-octadecenoyl-sn-glycero-3-phosphate + CoA. It catalyses the reaction (9Z)-hexadecenoyl-CoA + 1-(9Z-octadecenoyl)-sn-glycero-3-phosphate = 1-(9Z-octadecenoyl)-2-(9Z-hexadecenoyl)-sn-glycero-3-phosphate + CoA. It functions in the pathway phospholipid metabolism; CDP-diacylglycerol biosynthesis; CDP-diacylglycerol from sn-glycerol 3-phosphate: step 2/3. Converts 1-acyl-sn-glycerol-3-phosphate (lysophosphatidic acid or LPA) into 1,2-diacyl-sn-glycerol-3-phosphate (phosphatidic acid or PA) by incorporating an acyl moiety at the sn-2 position of the glycerol backbone. In Bos taurus (Bovine), this protein is 1-acyl-sn-glycerol-3-phosphate acyltransferase alpha (AGPAT1).